We begin with the raw amino-acid sequence, 75 residues long: uncharacterized protein (75 aa).

The span at 19 to 38 shows a compositional bias: polar residues; the sequence is FHNTAPSKTNVNVPRANKSQ. The tract at residues 19–42 is disordered; it reads FHNTAPSKTNVNVPRANKSQSKGK. Residues 47 to 66 form a helical membrane-spanning segment; that stretch reads LLVLVGTLALVTSVISVNYQ.

The protein localises to the membrane. This is an uncharacterized protein from Saccharomyces cerevisiae (strain ATCC 204508 / S288c) (Baker's yeast).